Here is an 874-residue protein sequence, read N- to C-terminus: Alanine--tRNA ligase (874 aa).

4 residues coordinate Zn(2+): H564, H568, C665, and H669.

This sequence belongs to the class-II aminoacyl-tRNA synthetase family. Zn(2+) serves as cofactor.

Its subcellular location is the cytoplasm. It carries out the reaction tRNA(Ala) + L-alanine + ATP = L-alanyl-tRNA(Ala) + AMP + diphosphate. Its function is as follows. Catalyzes the attachment of alanine to tRNA(Ala) in a two-step reaction: alanine is first activated by ATP to form Ala-AMP and then transferred to the acceptor end of tRNA(Ala). Also edits incorrectly charged Ser-tRNA(Ala) and Gly-tRNA(Ala) via its editing domain. The sequence is that of Alanine--tRNA ligase from Polaromonas naphthalenivorans (strain CJ2).